Here is a 409-residue protein sequence, read N- to C-terminus: Dihydroorotase (409 aa).

Zn(2+) contacts are provided by His-57 and His-59. Residues His-59–Arg-61 and Asn-91 each bind substrate. Lys-139, His-168, His-208, and Asp-276 together coordinate Zn(2+). The residue at position 139 (Lys-139) is an N6-carboxylysine. Asp-276 is a catalytic residue. Substrate contacts are provided by residues His-280 and Ala-290 to Gly-291.

This sequence belongs to the metallo-dependent hydrolases superfamily. DHOase family. Class I DHOase subfamily. Requires Zn(2+) as cofactor.

The enzyme catalyses (S)-dihydroorotate + H2O = N-carbamoyl-L-aspartate + H(+). The protein operates within pyrimidine metabolism; UMP biosynthesis via de novo pathway; (S)-dihydroorotate from bicarbonate: step 3/3. Functionally, catalyzes the reversible cyclization of carbamoyl aspartate to dihydroorotate. In Thermococcus kodakarensis (strain ATCC BAA-918 / JCM 12380 / KOD1) (Pyrococcus kodakaraensis (strain KOD1)), this protein is Dihydroorotase.